A 493-amino-acid polypeptide reads, in one-letter code: F(420)H(2) dehydrogenase subunit N (493 aa).

14 consecutive transmembrane segments (helical) span residues 7–27 (LAPE…GVFL), 34–54 (ILGY…VKSF), 78–98 (LSQF…IASI), 107–127 (TEEF…VASA), 130–150 (LILL…LAGF), 165–185 (FVIG…VYGA), 205–225 (PIGI…MALV), 244–264 (ALLA…VFII), 273–293 (WQFM…VVAV), 310–330 (AGYI…GGIM), 333–353 (LAHA…VWMI), 381–401 (ALCM…AGFM), 404–424 (FVLF…IAIL), and 454–474 (IPFP…VMGL).

The protein belongs to the complex I subunit 2 family. In terms of assembly, the FPO complex is composed of at least 13 different subunits. FpoA, FpoH, FpoJ, FpoK, FpoL, FpoM and FpoN proteins constitute the membrane sector of the complex.

Its subcellular location is the cell membrane. It carries out the reaction methanophenazine + reduced coenzyme F420-(gamma-L-Glu)(n) = dihydromethanophenazine + oxidized coenzyme F420-(gamma-L-Glu)(n) + H(+). Its function is as follows. Component of the F(420)H(2) dehydrogenase (FPO complex) which is part of the energy-conserving F(420)H(2):heterodisulfide oxidoreductase system. The membrane-bound electron transfer system of the complex plays an important role in the metabolism of methylotrophic methanogens when the organisms grow on methanol or methylamines. Catalyzes the oxidation of methanophenazine to dihydromethanophenazine. It shuttles electrons from F(420)H(2), via FAD and iron-sulfur (Fe-S) centers, to methanophenazine (an electron carrier in the membrane). It couples the redox reaction to proton translocation (for every two electrons transferred, two hydrogen ions are translocated across the cytoplasmic membrane), and thus conserves the redox energy in a proton gradient. It also catalyzes the oxidation of F(420)H(2) with quinones such as 2,3-dimethyl-1,4-naphthoquinone, 2-methyl-1,4-naphthoquinone and tetramethyl-p-benzoquinone. This Methanosarcina mazei (strain ATCC BAA-159 / DSM 3647 / Goe1 / Go1 / JCM 11833 / OCM 88) (Methanosarcina frisia) protein is F(420)H(2) dehydrogenase subunit N (fpoN).